The following is a 100-amino-acid chain: Large ribosomal subunit protein uL23 (100 aa).

The protein belongs to the universal ribosomal protein uL23 family. In terms of assembly, part of the 50S ribosomal subunit. Contacts protein L29, and trigger factor when it is bound to the ribosome.

Its function is as follows. One of the early assembly proteins it binds 23S rRNA. One of the proteins that surrounds the polypeptide exit tunnel on the outside of the ribosome. Forms the main docking site for trigger factor binding to the ribosome. In Mycobacterium ulcerans (strain Agy99), this protein is Large ribosomal subunit protein uL23.